The chain runs to 624 residues: Chaperone protein HtpG (624 aa).

The interval 1–336 (MKGQETRGFQ…SNDLPLNVSR (336 aa)) is a; substrate-binding. The b stretch occupies residues 337 to 552 (EILQDSSITR…NDEMSTQMAK (216 aa)). Positions 553-624 (LFAAAGQAVP…IRRMNQLLVS (72 aa)) are c.

Belongs to the heat shock protein 90 family. In terms of assembly, homodimer.

The protein localises to the cytoplasm. Molecular chaperone. Has ATPase activity. The polypeptide is Chaperone protein HtpG (Cronobacter sakazakii (strain ATCC BAA-894) (Enterobacter sakazakii)).